Reading from the N-terminus, the 161-residue chain is MKITNFTKSFLLYEIIVGMFLTLKYFFKSKVTIRYPNEVSKLSPRFKGEHALRRYPDGEERCIACKLCEAICPAQAITIEAKEQPNGSRRTTKYDIDMTKCIYCGLCQEACPVDAIVEGPNLEFATETHQELLYNKEKLLRNGDMWEHVIAKNLKVDSIYR.

4Fe-4S ferredoxin-type domains lie at leucine 52–lysine 82 and threonine 92–asparagine 121. [4Fe-4S] cluster contacts are provided by cysteine 62, cysteine 65, cysteine 68, cysteine 72, cysteine 101, cysteine 104, cysteine 107, and cysteine 111.

This sequence belongs to the complex I 23 kDa subunit family. As to quaternary structure, NDH-1 is composed of 14 different subunits. Subunits NuoA, H, J, K, L, M, N constitute the membrane sector of the complex. Requires [4Fe-4S] cluster as cofactor.

Its subcellular location is the cell inner membrane. The catalysed reaction is a quinone + NADH + 5 H(+)(in) = a quinol + NAD(+) + 4 H(+)(out). NDH-1 shuttles electrons from NADH, via FMN and iron-sulfur (Fe-S) centers, to quinones in the respiratory chain. The immediate electron acceptor for the enzyme in this species is believed to be ubiquinone. Couples the redox reaction to proton translocation (for every two electrons transferred, four hydrogen ions are translocated across the cytoplasmic membrane), and thus conserves the redox energy in a proton gradient. The polypeptide is NADH-quinone oxidoreductase subunit I (Orientia tsutsugamushi (strain Boryong) (Rickettsia tsutsugamushi)).